Here is a 151-residue protein sequence, read N- to C-terminus: Transcriptional regulator MraZ (151 aa).

SpoVT-AbrB domains lie at 5-52 (ANAI…PLPE) and 81-124 (AVDL…DEDA).

This sequence belongs to the MraZ family. As to quaternary structure, forms oligomers.

It is found in the cytoplasm. Its subcellular location is the nucleoid. The sequence is that of Transcriptional regulator MraZ from Pseudomonas aeruginosa (strain LESB58).